A 370-amino-acid polypeptide reads, in one-letter code: UDP-N-acetylglucosamine--N-acetylmuramyl-(pentapeptide) pyrophosphoryl-undecaprenol N-acetylglucosamine transferase (370 aa).

UDP-N-acetyl-alpha-D-glucosamine-binding positions include 20–22 (TAG), Asn-134, Arg-170, Ser-204, Ile-257, and Gln-301.

Belongs to the glycosyltransferase 28 family. MurG subfamily.

The protein localises to the cell membrane. It carries out the reaction di-trans,octa-cis-undecaprenyl diphospho-N-acetyl-alpha-D-muramoyl-L-alanyl-D-glutamyl-meso-2,6-diaminopimeloyl-D-alanyl-D-alanine + UDP-N-acetyl-alpha-D-glucosamine = di-trans,octa-cis-undecaprenyl diphospho-[N-acetyl-alpha-D-glucosaminyl-(1-&gt;4)]-N-acetyl-alpha-D-muramoyl-L-alanyl-D-glutamyl-meso-2,6-diaminopimeloyl-D-alanyl-D-alanine + UDP + H(+). The protein operates within cell wall biogenesis; peptidoglycan biosynthesis. Cell wall formation. Catalyzes the transfer of a GlcNAc subunit on undecaprenyl-pyrophosphoryl-MurNAc-pentapeptide (lipid intermediate I) to form undecaprenyl-pyrophosphoryl-MurNAc-(pentapeptide)GlcNAc (lipid intermediate II). This Corynebacterium jeikeium (strain K411) protein is UDP-N-acetylglucosamine--N-acetylmuramyl-(pentapeptide) pyrophosphoryl-undecaprenol N-acetylglucosamine transferase.